A 269-amino-acid polypeptide reads, in one-letter code: Fructose-2,6-bisphosphatase TIGAR (269 aa).

His11 serves as the catalytic Tele-phosphohistidine intermediate. Glu89 serves as the catalytic Proton donor/acceptor.

This sequence belongs to the phosphoglycerate mutase family. As to quaternary structure, interacts with HK2; the interaction increases hexokinase HK2 activity in a hypoxia- and HIF1A-dependent manner, resulting in the regulation of mitochondrial membrane potential, thus increasing NADPH production and decreasing intracellular ROS levels. As to expression, expressed in olfactory bulb, cerebellum, and cortex. Expressed in neurons and astrocytes (at protein level). Expressed in intestinal crypt.

Its subcellular location is the cytoplasm. It is found in the nucleus. The protein localises to the mitochondrion. The enzyme catalyses beta-D-fructose 2,6-bisphosphate + H2O = beta-D-fructose 6-phosphate + phosphate. Functionally, fructose-bisphosphatase hydrolyzing fructose-2,6-bisphosphate as well as fructose-1,6-bisphosphate. Acts as a negative regulator of glycolysis by lowering intracellular levels of fructose-2,6-bisphosphate in a p53/TP53-dependent manner, resulting in the pentose phosphate pathway (PPP) activation and NADPH production. Contributes to the generation of reduced glutathione to cause a decrease in intracellular reactive oxygen species (ROS) content, correlating with its ability to protect cells from oxidative or metabolic stress-induced cell death. Plays a role in promoting protection against cell death during hypoxia by decreasing mitochondria ROS levels in a HK2-dependent manner through a mechanism that is independent of its fructose-bisphosphatase activity. In response to cardiac damage stress, mediates p53-induced inhibition of myocyte mitophagy through ROS levels reduction and the subsequent inactivation of BNIP3. Reduced mitophagy results in an enhanced apoptotic myocyte cell death, and exacerbates cardiac damage. Plays a role in adult intestinal regeneration; contributes to the growth, proliferation and survival of intestinal crypts following tissue ablation. Plays a neuroprotective role against ischemic brain damage by enhancing PPP flux and preserving mitochondria functions. Protects glioma cells from hypoxia- and ROS-induced cell death by inhibiting glycolysis and activating mitochondrial energy metabolism and oxygen consumption in a TKTL1-dependent and p53/TP53-independent manner. Plays a role in cancer cell survival by promoting DNA repair through activating PPP flux in a CDK5-ATM-dependent signaling pathway during hypoxia and/or genome stress-induced DNA damage responses. Involved in intestinal tumor progression. The chain is Fructose-2,6-bisphosphatase TIGAR from Mus musculus (Mouse).